The chain runs to 71 residues: Prokaryotic ubiquitin-like protein Pup (71 aa).

The segment at 1-30 (MPSASGHHQIPAETQRHDDDQTQETAQGLS) is disordered. Positions 23–56 (QETAQGLSAAAMLAQEQADDLDAILDDIETVLET) form a coiled coil. The interval 27–65 (QGLSAAAMLAQEQADDLDAILDDIETVLETNAEEYVSSF) is ARC ATPase binding. Glu-71 participates in a covalent cross-link: Isoglutamyl lysine isopeptide (Glu-Lys) (interchain with K-? in acceptor proteins).

Belongs to the prokaryotic ubiquitin-like protein family. Strongly interacts with the proteasome-associated ATPase ARC through a hydrophobic interface; the interacting region of Pup lies in its C-terminal half. There is one Pup binding site per ARC hexamer ring.

It functions in the pathway protein degradation; proteasomal Pup-dependent pathway. Protein modifier that is covalently attached to lysine residues of substrate proteins, thereby targeting them for proteasomal degradation. The tagging system is termed pupylation. This Bifidobacterium animalis subsp. lactis (strain AD011) protein is Prokaryotic ubiquitin-like protein Pup.